Consider the following 354-residue polypeptide: Holliday junction branch migration complex subunit RuvB (354 aa).

The tract at residues 4–190 (TDKLAAERII…FGIVARLEFY (187 aa)) is large ATPase domain (RuvB-L). ATP-binding positions include leucine 29, arginine 30, glycine 71, lysine 74, threonine 75, threonine 76, 137-139 (EDY), arginine 180, tyrosine 190, and arginine 227. Threonine 75 provides a ligand contact to Mg(2+). Positions 191-261 (NAEELARIVT…VADAALKMLD (71 aa)) are small ATPAse domain (RuvB-S). The interval 264 to 354 (AVGFDLMDRK…LPGLWDSAAT (91 aa)) is head domain (RuvB-H). Residues arginine 300, arginine 319, and arginine 324 each contribute to the DNA site.

This sequence belongs to the RuvB family. As to quaternary structure, homohexamer. Forms an RuvA(8)-RuvB(12)-Holliday junction (HJ) complex. HJ DNA is sandwiched between 2 RuvA tetramers; dsDNA enters through RuvA and exits via RuvB. An RuvB hexamer assembles on each DNA strand where it exits the tetramer. Each RuvB hexamer is contacted by two RuvA subunits (via domain III) on 2 adjacent RuvB subunits; this complex drives branch migration. In the full resolvosome a probable DNA-RuvA(4)-RuvB(12)-RuvC(2) complex forms which resolves the HJ.

The protein localises to the cytoplasm. It carries out the reaction ATP + H2O = ADP + phosphate + H(+). In terms of biological role, the RuvA-RuvB-RuvC complex processes Holliday junction (HJ) DNA during genetic recombination and DNA repair, while the RuvA-RuvB complex plays an important role in the rescue of blocked DNA replication forks via replication fork reversal (RFR). RuvA specifically binds to HJ cruciform DNA, conferring on it an open structure. The RuvB hexamer acts as an ATP-dependent pump, pulling dsDNA into and through the RuvAB complex. RuvB forms 2 homohexamers on either side of HJ DNA bound by 1 or 2 RuvA tetramers; 4 subunits per hexamer contact DNA at a time. Coordinated motions by a converter formed by DNA-disengaged RuvB subunits stimulates ATP hydrolysis and nucleotide exchange. Immobilization of the converter enables RuvB to convert the ATP-contained energy into a lever motion, pulling 2 nucleotides of DNA out of the RuvA tetramer per ATP hydrolyzed, thus driving DNA branch migration. The RuvB motors rotate together with the DNA substrate, which together with the progressing nucleotide cycle form the mechanistic basis for DNA recombination by continuous HJ branch migration. Branch migration allows RuvC to scan DNA until it finds its consensus sequence, where it cleaves and resolves cruciform DNA. The polypeptide is Holliday junction branch migration complex subunit RuvB (Paraburkholderia phytofirmans (strain DSM 17436 / LMG 22146 / PsJN) (Burkholderia phytofirmans)).